A 61-amino-acid chain; its full sequence is uncharacterized protein (61 aa).

2 helical membrane passes run 5 to 25 and 29 to 49; these read MLYF…SLLL and YILT…PWYT.

The protein localises to the membrane. This is an uncharacterized protein from Saccharomyces cerevisiae (strain ATCC 204508 / S288c) (Baker's yeast).